A 115-amino-acid polypeptide reads, in one-letter code: Protachykinin-1 (115 aa).

The N-terminal stretch at 1–19 (MKILVALAVLALVSTQLFA) is a signal peptide. A propeptide spanning residues 20–56 (EDIRANDDLNYWSDWSDSDQIKEELPEPFEHLLQRIA) is cleaved from the precursor. Methionine amide occurs at positions 68 and 92.

This sequence belongs to the tachykinin family. The substance P form is cleaved at Pro-59 by the prolyl endopeptidase FAP (seprase) activity (in vitro). Substance P is also cleaved and degraded by Angiotensin-converting enzyme (ACE) and neprilysin (MME).

The protein localises to the secreted. In terms of biological role, tachykinins are active peptides which excite neurons, evoke behavioral responses, are potent vasodilators and secretagogues, and contract (directly or indirectly) many smooth muscles. The polypeptide is Protachykinin-1 (TAC1) (Oryctolagus cuniculus (Rabbit)).